Here is a 201-residue protein sequence, read N- to C-terminus: MARYTGPRTRIARKFGEAIFGADKVLSKKNYPPGQHGNSRKRKTSEYGIQLREKQKAKYTYGVLEKQFRNLFEKASRSKGITGEVLLQLLEGRLDNVVYRLGIAPTRAAARQLVSHRHITVDGSVVNIPSYSVKPGQVIGVREKSKSMEVIADALSGFNHSQYPWIEWDQSSMSGKLLHLPERADIPENIKEQLIVELYSK.

The segment at 27 to 47 (SKKNYPPGQHGNSRKRKTSEY) is disordered. The 61-residue stretch at 92-152 (GRLDNVVYRL…EKSKSMEVIA (61 aa)) folds into the S4 RNA-binding domain.

The protein belongs to the universal ribosomal protein uS4 family. In terms of assembly, part of the 30S ribosomal subunit. Contacts protein S5. The interaction surface between S4 and S5 is involved in control of translational fidelity.

Functionally, one of the primary rRNA binding proteins, it binds directly to 16S rRNA where it nucleates assembly of the body of the 30S subunit. In terms of biological role, with S5 and S12 plays an important role in translational accuracy. This Parabacteroides distasonis (strain ATCC 8503 / DSM 20701 / CIP 104284 / JCM 5825 / NCTC 11152) protein is Small ribosomal subunit protein uS4.